The primary structure comprises 280 residues: Transmembrane protein 45B (280 aa).

7 helical membrane-spanning segments follow: residues 7 to 27 (HALP…KYPL), 49 to 69 (LIEG…EQFV), 96 to 116 (MYLF…PLNL), 120 to 140 (LDRL…YYHV), 150 to 170 (IHSL…IEVF), 184 to 204 (LTIL…PLGG), and 216 to 236 (VMFI…IMAI).

The protein belongs to the TMEM45 family.

The protein resides in the membrane. This Xenopus tropicalis (Western clawed frog) protein is Transmembrane protein 45B (tmem45b).